The chain runs to 138 residues: Nucleoside diphosphate kinase (138 aa).

ATP is bound by residues Lys-9, Phe-57, Arg-85, Thr-91, Arg-102, and Asn-112. The active-site Pros-phosphohistidine intermediate is His-115.

This sequence belongs to the NDK family. In terms of assembly, homotetramer. Mg(2+) is required as a cofactor.

It is found in the cytoplasm. The catalysed reaction is a 2'-deoxyribonucleoside 5'-diphosphate + ATP = a 2'-deoxyribonucleoside 5'-triphosphate + ADP. It carries out the reaction a ribonucleoside 5'-diphosphate + ATP = a ribonucleoside 5'-triphosphate + ADP. Its function is as follows. Major role in the synthesis of nucleoside triphosphates other than ATP. The ATP gamma phosphate is transferred to the NDP beta phosphate via a ping-pong mechanism, using a phosphorylated active-site intermediate. In Desulfatibacillum aliphaticivorans, this protein is Nucleoside diphosphate kinase.